Reading from the N-terminus, the 656-residue chain is DNA ligase (656 aa).

NAD(+) contacts are provided by residues 32–36 and 81–82; these read DAVYD and SL. Lys112 serves as the catalytic N6-AMP-lysine intermediate. 3 residues coordinate NAD(+): Arg133, Glu167, and Lys306. Cys400, Cys403, Cys416, and Cys421 together coordinate Zn(2+). Positions 577–656 constitute a BRCT domain; that stretch reads ESSSVFSNKT…ELLKRLKEFD (80 aa).

Belongs to the NAD-dependent DNA ligase family. LigA subfamily. Requires Mg(2+) as cofactor. The cofactor is Mn(2+).

The enzyme catalyses NAD(+) + (deoxyribonucleotide)n-3'-hydroxyl + 5'-phospho-(deoxyribonucleotide)m = (deoxyribonucleotide)n+m + AMP + beta-nicotinamide D-nucleotide.. In terms of biological role, DNA ligase that catalyzes the formation of phosphodiester linkages between 5'-phosphoryl and 3'-hydroxyl groups in double-stranded DNA using NAD as a coenzyme and as the energy source for the reaction. It is essential for DNA replication and repair of damaged DNA. The sequence is that of DNA ligase from Helicobacter pylori (strain Shi470).